The sequence spans 104 residues: UPF0145 protein cbdbA1711 (104 aa).

It belongs to the UPF0145 family.

This Dehalococcoides mccartyi (strain CBDB1) protein is UPF0145 protein cbdbA1711.